The following is a 379-amino-acid chain: Cytochrome b (379 aa).

The next 4 helical transmembrane spans lie at 33–53 (FGSLLGMCLMIQILTGLFLAM), 77–98 (WLIRYLHANGASMFFICLFIHV), 113–133 (WNIGIILFLTTMATAFVGYVL), and 178–198 (FFAFHFILPFIITAFALVHLL). Heme b contacts are provided by H83 and H97. Heme b contacts are provided by H182 and H196. An a ubiquinone-binding site is contributed by H201. 4 helical membrane passes run 226–246 (TKDLLGIFLLLLVLMILALFF), 288–308 (LGGVLALVLSILILAAFPLLN), 320–340 (ITQVIYWIFIANLLVLTWIGG), and 347–367 (FTMIGQIASITYFAIIIILIP).

It belongs to the cytochrome b family. In terms of assembly, the cytochrome bc1 complex contains 11 subunits: 3 respiratory subunits (MT-CYB, CYC1 and UQCRFS1), 2 core proteins (UQCRC1 and UQCRC2) and 6 low-molecular weight proteins (UQCRH/QCR6, UQCRB/QCR7, UQCRQ/QCR8, UQCR10/QCR9, UQCR11/QCR10 and a cleavage product of UQCRFS1). This cytochrome bc1 complex then forms a dimer. Heme b serves as cofactor.

It localises to the mitochondrion inner membrane. Functionally, component of the ubiquinol-cytochrome c reductase complex (complex III or cytochrome b-c1 complex) that is part of the mitochondrial respiratory chain. The b-c1 complex mediates electron transfer from ubiquinol to cytochrome c. Contributes to the generation of a proton gradient across the mitochondrial membrane that is then used for ATP synthesis. The sequence is that of Cytochrome b (MT-CYB) from Akodon spegazzinii (Spegazzini's grass mouse).